The following is an 836-amino-acid chain: Protein O-mannosyl-transferase TMTC2 (836 aa).

Residues 1-21 traverse the membrane as a helical segment; that stretch reads MIAELVSSALGLALYLNTLSA. At 22-84 the chain is on the extracellular side; sequence DFCYDDSRAI…LNHAIGGLNP (63 aa). A helical membrane pass occupies residues 85-105; the sequence is WSYHLVNVLLHAAVTGLFTSF. Over 106–107 the chain is Cytoplasmic; the sequence is SK. A helical membrane pass occupies residues 108-128; sequence ILLGDGYWTFMAGLMFASHPI. The Extracellular segment spans residues 129–132; it reads HTEA. The chain crosses the membrane as a helical span at residues 133–153; that stretch reads VAGIVGRADVGASLFFLLSLL. At 154 to 162 the chain is on the cytoplasmic side; that stretch reads CYIKHCSTR. The next 2 membrane-spanning stretches (helical) occupy residues 163 to 184 and 185 to 204; these read GYSA…CSML and WKEQ…VFVF. Residues 205-220 lie on the Cytoplasmic side of the membrane; it reads HRLKIKQILPTIYKRK. Residues 221–241 form a helical membrane-spanning segment; the sequence is NLSLFLSISLLIFWGSSLLGA. Over 242-312 the chain is Extracellular; it reads RLYWMGNKPP…KTVCDWRNLH (71 aa). The helical transmembrane segment at 313–333 threads the bilayer; that stretch reads TVAFYTGLLLLAYYGLKSPSV. Residues 334–399 lie on the Cytoplasmic side of the membrane; it reads DRECNGKTVT…TENIVVLSLS (66 aa). Residues 400–420 traverse the membrane as a helical segment; the sequence is LLIIPFVPATNLFFYVGFVIA. At 421–422 the chain is on the extracellular side; sequence ER. The chain crosses the membrane as a helical span at residues 423–443; that stretch reads VLYIPSMGFCLLITVGARALY. Over 444–449 the chain is Cytoplasmic; that stretch reads VKVQKR. Residues 450–470 traverse the membrane as a helical segment; that stretch reads FLKSLIFYATATLIVFYGLKT. Residues 471 to 836 lie on the Extracellular side of the membrane; sequence AIRNGDWQNE…EKQGLKTSKT (366 aa). 9 TPR repeats span residues 493–526, 527–560, 561–594, 606–639, 643–676, 677–710, 711–744, 745–778, and 779–812; these read AKAW…RSNM, ADML…RPTL, ASAY…PDEN, TSCL…MPRQ, QSLY…KTDH, IPAH…DPTK, GNCY…DSTE, FDVV…RPNY, and PAAL…KPDD.

This sequence belongs to the TMTC family.

It localises to the membrane. The protein resides in the endoplasmic reticulum. The enzyme catalyses a di-trans,poly-cis-dolichyl beta-D-mannosyl phosphate + L-seryl-[protein] = 3-O-(alpha-D-mannosyl)-L-seryl-[protein] + a di-trans,poly-cis-dolichyl phosphate + H(+). It carries out the reaction a di-trans,poly-cis-dolichyl beta-D-mannosyl phosphate + L-threonyl-[protein] = 3-O-(alpha-D-mannosyl)-L-threonyl-[protein] + a di-trans,poly-cis-dolichyl phosphate + H(+). The protein operates within protein modification; protein glycosylation. In terms of biological role, transfers mannosyl residues to the hydroxyl group of serine or threonine residues. The 4 members of the TMTC family are O-mannosyl-transferases dedicated primarily to the cadherin superfamily, each member seems to have a distinct role in decorating the cadherin domains with O-linked mannose glycans at specific regions. Also acts as O-mannosyl-transferase on other proteins such as PDIA3. The polypeptide is Protein O-mannosyl-transferase TMTC2 (Homo sapiens (Human)).